The chain runs to 323 residues: NADH-cytochrome b5 reductase 2 (323 aa).

Residues leucine 30 to leucine 46 form a helical membrane-spanning segment. The region spanning glutamine 72–glutamate 177 is the FAD-binding FR-type domain. Lysine 180 to leucine 215 provides a ligand contact to FAD.

Belongs to the flavoprotein pyridine nucleotide cytochrome reductase family. The cofactor is FAD.

The protein resides in the mitochondrion outer membrane. The catalysed reaction is 2 Fe(III)-[cytochrome b5] + NADH = 2 Fe(II)-[cytochrome b5] + NAD(+) + H(+). Functionally, may mediate the reduction of outer membrane cytochrome b5. This is NADH-cytochrome b5 reductase 2 (mcr1) from Aspergillus oryzae (strain ATCC 42149 / RIB 40) (Yellow koji mold).